The following is a 222-amino-acid chain: C-8 sterol isomerase ERG2 (222 aa).

Residues 3–23 traverse the membrane as a helical segment; that stretch reads FFPLLLLIGVVGYIMNVLFTT.

It belongs to the ERG2 family.

Its subcellular location is the endoplasmic reticulum membrane. It carries out the reaction fecosterol = episterol. Its pathway is steroid metabolism; ergosterol biosynthesis; ergosterol from zymosterol: step 2/5. Its activity is regulated as follows. Catalytic activity is inhibited by the morphilines tridemorph, fenpropimorph, and fenpropidin. Its function is as follows. C-8 sterol isomerase; part of the third module of ergosterol biosynthesis pathway that includes the late steps of the pathway. ERG2 catalyzes the reaction which results in unsaturation at C-7 in the B ring of sterols and thus converts fecosterol to episterol. The third module or late pathway involves the ergosterol synthesis itself through consecutive reactions that mainly occur in the endoplasmic reticulum (ER) membrane. Firstly, the squalene synthase ERG9 catalyzes the condensation of 2 farnesyl pyrophosphate moieties to form squalene, which is the precursor of all steroids. Squalene synthase is crucial for balancing the incorporation of farnesyl diphosphate (FPP) into sterol and nonsterol isoprene synthesis. Secondly, the squalene epoxidase ERG1 catalyzes the stereospecific oxidation of squalene to (S)-2,3-epoxysqualene, which is considered to be a rate-limiting enzyme in steroid biosynthesis. Then, the lanosterol synthase ERG7 catalyzes the cyclization of (S)-2,3 oxidosqualene to lanosterol, a reaction that forms the sterol core. In the next steps, lanosterol is transformed to zymosterol through a complex process involving various demethylation, reduction and desaturation reactions. The lanosterol 14-alpha-demethylase ERG11 (also known as CYP51) catalyzes C14-demethylation of lanosterol to produce 4,4'-dimethyl cholesta-8,14,24-triene-3-beta-ol, which is critical for ergosterol biosynthesis. The C-14 reductase ERG24 reduces the C14=C15 double bond of 4,4-dimethyl-cholesta-8,14,24-trienol to produce 4,4-dimethyl-cholesta-8,24-dienol. 4,4-dimethyl-cholesta-8,24-dienol is substrate of the C-4 demethylation complex ERG25-ERG26-ERG27 in which ERG25 catalyzes the three-step monooxygenation required for the demethylation of 4,4-dimethyl and 4alpha-methylsterols, ERG26 catalyzes the oxidative decarboxylation that results in a reduction of the 3-beta-hydroxy group at the C-3 carbon to an oxo group, and ERG27 is responsible for the reduction of the keto group on the C-3. ERG28 has a role as a scaffold to help anchor ERG25, ERG26 and ERG27 to the endoplasmic reticulum and ERG29 regulates the activity of the iron-containing C4-methylsterol oxidase ERG25. Then, the sterol 24-C-methyltransferase ERG6 catalyzes the methyl transfer from S-adenosyl-methionine to the C-24 of zymosterol to form fecosterol. The C-8 sterol isomerase ERG2 catalyzes the reaction which results in unsaturation at C-7 in the B ring of sterols and thus converts fecosterol to episterol. The sterol-C5-desaturase ERG3 then catalyzes the introduction of a C-5 double bond in the B ring to produce 5-dehydroepisterol. The C-22 sterol desaturase ERG5 further converts 5-dehydroepisterol into ergosta-5,7,22,24(28)-tetraen-3beta-ol by forming the C-22(23) double bond in the sterol side chain. Finally, ergosta-5,7,22,24(28)-tetraen-3beta-ol is substrate of the C-24(28) sterol reductase ERG4 to produce ergosterol. This chain is C-8 sterol isomerase ERG2, found in Saccharomyces cerevisiae (strain ATCC 204508 / S288c) (Baker's yeast).